The sequence spans 35 residues: Thionin NsW1 (35 aa).

3 disulfides stabilise this stretch: C4-C32, C12-C30, and C16-C26.

In terms of processing, contains 4 disulfide bonds.

The protein localises to the secreted. Its function is as follows. Antimicrobial peptide disrupting membranes. Has antibacterial against Gram-positive bacteria S.aureus (MIC=6.5 uM) and B.subtilis (MIC=3.25 uM) but not against Gram-negative bacterium E.coli. Has antifungal activity against C.albicans (MIC=1.63 uM). The protein is Thionin NsW1 of Nigella sativa (Black cumin).